The primary structure comprises 430 residues: Mannan endo-1,4-beta-mannosidase (430 aa).

E173 functions as the Proton donor in the catalytic mechanism. E269 functions as the Nucleophile in the catalytic mechanism. 2 consecutive CBM10 domains span residues 357 to 390 (SCGT…CVVA) and 395 to 424 (SCNW…CIAA).

Belongs to the glycosyl hydrolase 5 (cellulase A) family.

The enzyme catalyses Random hydrolysis of (1-&gt;4)-beta-D-mannosidic linkages in mannans, galactomannans and glucomannans.. Functionally, catalyzes the endo hydrolysis of beta-1,4-linked mannan, galactomannan and glucomannan. It is able to hydrolyze mannosidic linkages that are flanked by mannose or glucose. This chain is Mannan endo-1,4-beta-mannosidase, found in Cellvibrio japonicus (strain Ueda107) (Pseudomonas fluorescens subsp. cellulosa).